Here is a 364-residue protein sequence, read N- to C-terminus: MRVLVSGGGTGGHIYPALALIREIKKLNPEARFLYIGTENGLESTIVPKAGIPFQSIVISGFKRKISLDNVKTVMRFLKGVQDSKRYIRRFNPDIVIGTGGYVCGPVVYAAAKLGIPTIVHEQNSVPGVTNKFLSRYVDKVAVCFEAAAEHFPQSKVVMTGNPRASEVMDQNGMKGKRSVGLSLPKKSVLIFGGSRGARPINDAFVEAIEQFGNKSYEILYVTGEVHYDKVMEAVKQKGNPNNVIIKPFIHNMPEVLTGVDLVVSRAGATTLAELTALGKPSVLIPSPYVTNNHQEKNARSVVDKGAAKMLLEKDLTAETLIRDIDEILLDAQTLQNMKLAAGQLGIPDAANKLYEVMNKLVKK.

UDP-N-acetyl-alpha-D-glucosamine contacts are provided by residues Thr10 to Gly12, Asn124, Ser195, Ile250, and Gln295.

This sequence belongs to the glycosyltransferase 28 family. MurG subfamily.

Its subcellular location is the cell membrane. The enzyme catalyses di-trans,octa-cis-undecaprenyl diphospho-N-acetyl-alpha-D-muramoyl-L-alanyl-D-glutamyl-meso-2,6-diaminopimeloyl-D-alanyl-D-alanine + UDP-N-acetyl-alpha-D-glucosamine = di-trans,octa-cis-undecaprenyl diphospho-[N-acetyl-alpha-D-glucosaminyl-(1-&gt;4)]-N-acetyl-alpha-D-muramoyl-L-alanyl-D-glutamyl-meso-2,6-diaminopimeloyl-D-alanyl-D-alanine + UDP + H(+). It functions in the pathway cell wall biogenesis; peptidoglycan biosynthesis. Its function is as follows. Cell wall formation. Catalyzes the transfer of a GlcNAc subunit on undecaprenyl-pyrophosphoryl-MurNAc-pentapeptide (lipid intermediate I) to form undecaprenyl-pyrophosphoryl-MurNAc-(pentapeptide)GlcNAc (lipid intermediate II). This Bacillus anthracis protein is UDP-N-acetylglucosamine--N-acetylmuramyl-(pentapeptide) pyrophosphoryl-undecaprenol N-acetylglucosamine transferase 1.